The primary structure comprises 516 residues: Nucleolar complex protein 4 homolog (516 aa).

A run of 3 helical transmembrane segments spans residues 296–316 (SACDVGGAISLLALNGLFILI), 347–367 (FFHLADLFLSSSHLPAYLVAA), and 375–395 (LALTAPPEALLMVLPLICNLL).

Belongs to the CBF/MAK21 family.

The protein localises to the nucleus membrane. It is found in the nucleus. The protein resides in the nucleolus. This Rattus norvegicus (Rat) protein is Nucleolar complex protein 4 homolog (Noc4l).